Here is a 956-residue protein sequence, read N- to C-terminus: Lon protease homolog, mitochondrial 1 (956 aa).

Disordered regions lie at residues 37-57 (NNNN…NNNN) and 83-123 (KKKG…GNEK). Residues 91-123 (NNDDNDNEKNEKNEKKVKNEKKEKNEKNDGNEK) are compositionally biased toward basic and acidic residues. The Lon N-terminal domain maps to 159–357 (VVIYPSNSVN…MLYHMILNEQ (199 aa)). 511 to 518 (GPPGTGKT) contributes to the ATP binding site. The Lon proteolytic domain occupies 747 to 945 (VTPIGVVNGL…KDVFEVAFPN (199 aa)). Residues 777-795 (KPLSSLPPSQQQQNQLEPS) are compositionally biased toward low complexity. A disordered region spans residues 777–800 (KPLSSLPPSQQQQNQLEPSIKTTG). Catalysis depends on residues Ser-851 and Lys-894.

This sequence belongs to the peptidase S16 family. In terms of assembly, homohexamer or homoheptamer. Organized in a ring with a central cavity.

The protein localises to the mitochondrion matrix. The catalysed reaction is Hydrolysis of proteins in presence of ATP.. Functionally, ATP-dependent serine protease that mediates the selective degradation of misfolded, unassembled or oxidatively damaged polypeptides as well as certain short-lived regulatory proteins in the mitochondrial matrix. May also have a chaperone function in the assembly of inner membrane protein complexes. Participates in the regulation of mitochondrial gene expression and in the maintenance of the integrity of the mitochondrial genome. Binds to mitochondrial DNA in a site-specific manner. The sequence is that of Lon protease homolog, mitochondrial 1 from Dictyostelium discoideum (Social amoeba).